Here is a 367-residue protein sequence, read N- to C-terminus: MMETQLYIGIMSGTSMDGADAVLVRMDGGKWLGAEGHAFTPYPDRLRRKLLDLQDTGTDELHRSRMLSQELSRLYAQTAAELLCSQNLAPCDITALGCHGQTVRHAPEHGYSIQLADLPLLAELTRIFTVGDFRSRDLAAGGQGAPLVPAFHEALFRDDRETRVVLNIGGIANISVLPPGAPAFGFDTGPGNMLMDAWTQAHWQLPYDKNGAKAAQGNILPQLLGRLLAHPYFSQPHPKSTGRELFALNWLETYLDGGENRYDVLRTLSRFTAQTVCDAVSHAAADARQMYICGGGIRNPVLMADLAECFGTRVSLHSTAELNLDPQWVEAAAFAWLAACWINRIPGSPHKATGASKPCILGAGYYY.

Residue 13 to 20 (GTSMDGAD) participates in ATP binding.

The protein belongs to the anhydro-N-acetylmuramic acid kinase family.

The enzyme catalyses 1,6-anhydro-N-acetyl-beta-muramate + ATP + H2O = N-acetyl-D-muramate 6-phosphate + ADP + H(+). The protein operates within amino-sugar metabolism; 1,6-anhydro-N-acetylmuramate degradation. Its pathway is cell wall biogenesis; peptidoglycan recycling. In terms of biological role, catalyzes the specific phosphorylation of 1,6-anhydro-N-acetylmuramic acid (anhMurNAc) with the simultaneous cleavage of the 1,6-anhydro ring, generating MurNAc-6-P. Is required for the utilization of anhMurNAc either imported from the medium or derived from its own cell wall murein, and thus plays a role in cell wall recycling. This Neisseria gonorrhoeae (strain ATCC 700825 / FA 1090) protein is Anhydro-N-acetylmuramic acid kinase.